The sequence spans 420 residues: MTEDIRAYMQTLGRQAREAAREMARADTGHKNAALHAMADALEEHAGDLKRANADDLENGRANNLDPALLDRLELNDERIHGMAEGLRQIAALPDPVGAIRDLAFRPSGIQVGRMRVPLGVIGIIYESRPNVTADAAALCLKSGNAAILRGGSEARHSNAAIAACVRAGLKRAGLPGEAVQVVETTDRAAVGELIRMDEYVDVLVPRGGKGLIERITAEATVPVIKHLDGICHVYIDDSADPAKAISVAYNAKTQRLGTCNTMETLLVAEAIAERVLPELARRYRESEVELRGCEATRRLIPDAVPATKEDWSTEYLDAIVSIRIVPGLDEAIEHIARHSSGHTESILTEDWSRARRFLREVDSSSVMVNASTRFADGFEYGLGAEIGISTDKLHARGPVGLEGLTTEKFIVLGDGHIRE.

Belongs to the gamma-glutamyl phosphate reductase family.

The protein localises to the cytoplasm. The catalysed reaction is L-glutamate 5-semialdehyde + phosphate + NADP(+) = L-glutamyl 5-phosphate + NADPH + H(+). The protein operates within amino-acid biosynthesis; L-proline biosynthesis; L-glutamate 5-semialdehyde from L-glutamate: step 2/2. Functionally, catalyzes the NADPH-dependent reduction of L-glutamate 5-phosphate into L-glutamate 5-semialdehyde and phosphate. The product spontaneously undergoes cyclization to form 1-pyrroline-5-carboxylate. The polypeptide is Gamma-glutamyl phosphate reductase (Alkalilimnicola ehrlichii (strain ATCC BAA-1101 / DSM 17681 / MLHE-1)).